The primary structure comprises 274 residues: Acetyl-coenzyme A carboxylase carboxyl transferase subunit beta (274 aa).

Residues 18-274 enclose the CoA carboxyltransferase N-terminal domain; sequence IWTKCKKCDY…FYNRQCFLKF (257 aa). Residues Cys-22, Cys-25, Cys-41, and Cys-44 each coordinate Zn(2+). The C4-type zinc-finger motif lies at 22-44; sequence CKKCDYILLQKDFEENLMVCPKC.

It belongs to the AccD/PCCB family. As to quaternary structure, acetyl-CoA carboxylase is a heterohexamer composed of biotin carboxyl carrier protein (AccB), biotin carboxylase (AccC) and two subunits each of ACCase subunit alpha (AccA) and ACCase subunit beta (AccD). The cofactor is Zn(2+).

It localises to the cytoplasm. It carries out the reaction N(6)-carboxybiotinyl-L-lysyl-[protein] + acetyl-CoA = N(6)-biotinyl-L-lysyl-[protein] + malonyl-CoA. The protein operates within lipid metabolism; malonyl-CoA biosynthesis; malonyl-CoA from acetyl-CoA: step 1/1. In terms of biological role, component of the acetyl coenzyme A carboxylase (ACC) complex. Biotin carboxylase (BC) catalyzes the carboxylation of biotin on its carrier protein (BCCP) and then the CO(2) group is transferred by the transcarboxylase to acetyl-CoA to form malonyl-CoA. The polypeptide is Acetyl-coenzyme A carboxylase carboxyl transferase subunit beta (Endomicrobium trichonymphae).